The sequence spans 222 residues: Cytidylate kinase (222 aa).

9–17 provides a ligand contact to ATP; that stretch reads GPSGAGKST.

It belongs to the cytidylate kinase family. Type 1 subfamily.

The protein localises to the cytoplasm. The enzyme catalyses CMP + ATP = CDP + ADP. It catalyses the reaction dCMP + ATP = dCDP + ADP. The sequence is that of Cytidylate kinase from Thermodesulfovibrio yellowstonii (strain ATCC 51303 / DSM 11347 / YP87).